Reading from the N-terminus, the 281-residue chain is Protein-S-isoprenylcysteine O-methyltransferase (281 aa).

Over 1-2 (ML) the chain is Cytoplasmic. The helical transmembrane segment at 3–29 (SPAGKISLQSFTGSSLVFFVICMFNHY) threads the bilayer. Residues 30–35 (YGITNL) lie on the Lumenal side of the membrane. Residues 36–53 (VVNTLIVFFYAVNVYFFL) form a helical membrane-spanning segment. Residues 54-58 (KFFYN) are Cytoplasmic-facing. The chain crosses the membrane as a helical span at residues 59-85 (EFAFAIAIRAAFLGLVLVLGLYIKLVA). Residues 86–88 (PPN) lie on the Lumenal side of the membrane. A helical transmembrane segment spans residues 89 to 113 (IQIFGGYMSVMALFHYSEFLAIAIV). The Cytoplasmic segment spans residues 114–118 (QPKQV). A helical membrane pass occupies residues 119-149 (STDSFVINHSPQYTIAAVSSWVEFFIETYFF). The Lumenal segment spans residues 150–155 (PGLKEI). A helical transmembrane segment spans residues 156–181 (HWLSNIGLCVCILGEVLRKTAILTAG). The Cytoplasmic portion of the chain corresponds to 182-208 (SNFNHLVQCEKSSDHVLVTHGVYAWFR). Residues Q189, 196–199 (HVLV), Y204, and 209–212 (HPSY) each bind S-adenosyl-L-methionine. A helical transmembrane segment spans residues 209 to 226 (HPSYVGWFYWSIGTQIIL). Over 227–229 (INP) the chain is Lumenal. A helical membrane pass occupies residues 230 to 243 (LCIPAYTLASWMFF). At 244 to 281 (KERIYIEESMLLSFFGQQYCDYQQQVGTGIPFIEGYKI) the chain is on the cytoplasmic side. R246 is a substrate binding site. E250 is a binding site for S-adenosyl-L-methionine.

Belongs to the class VI-like SAM-binding methyltransferase superfamily. Isoprenylcysteine carboxyl methyltransferase family.

It is found in the endoplasmic reticulum membrane. The enzyme catalyses [protein]-C-terminal S-[(2E,6E)-farnesyl]-L-cysteine + S-adenosyl-L-methionine = [protein]-C-terminal S-[(2E,6E)-farnesyl]-L-cysteine methyl ester + S-adenosyl-L-homocysteine. In terms of biological role, catalyzes the post-translational methylation of isoprenylated C-terminal cysteine residues. The sequence is that of Protein-S-isoprenylcysteine O-methyltransferase from Tribolium castaneum (Red flour beetle).